Reading from the N-terminus, the 500-residue chain is Glycerol kinase (500 aa).

Thr-13 contacts ADP. ATP-binding residues include Thr-13, Thr-14, and Ser-15. Thr-13 provides a ligand contact to sn-glycerol 3-phosphate. Arg-17 serves as a coordination point for ADP. Sn-glycerol 3-phosphate contacts are provided by Arg-83, Glu-84, Tyr-135, and Asp-244. Arg-83, Glu-84, Tyr-135, Asp-244, and Gln-245 together coordinate glycerol. ADP-binding residues include Thr-266 and Gly-309. Residues Thr-266, Gly-309, Gln-313, and Gly-410 each contribute to the ATP site. Gly-410 and Asn-414 together coordinate ADP.

This sequence belongs to the FGGY kinase family.

It carries out the reaction glycerol + ATP = sn-glycerol 3-phosphate + ADP + H(+). Its pathway is polyol metabolism; glycerol degradation via glycerol kinase pathway; sn-glycerol 3-phosphate from glycerol: step 1/1. With respect to regulation, inhibited by fructose 1,6-bisphosphate (FBP). Key enzyme in the regulation of glycerol uptake and metabolism. Catalyzes the phosphorylation of glycerol to yield sn-glycerol 3-phosphate. The chain is Glycerol kinase from Burkholderia multivorans (strain ATCC 17616 / 249).